The sequence spans 119 residues: Small ribosomal subunit protein bS16 (119 aa).

Basic residues predominate over residues 96–107 (RKKRRAYRQRRS). Residues 96–119 (RKKRRAYRQRRSTQREEAAKDATK) form a disordered region. Over residues 108–119 (TQREEAAKDATK) the composition is skewed to basic and acidic residues.

The protein belongs to the bacterial ribosomal protein bS16 family.

This is Small ribosomal subunit protein bS16 from Chlamydia pneumoniae (Chlamydophila pneumoniae).